A 347-amino-acid polypeptide reads, in one-letter code: NADH-ubiquinone oxidoreductase chain 2 (347 aa).

The next 11 membrane-spanning stretches (helical) occupy residues 3–23 (PPIF…VMTS), 25–45 (HWML…PILM), 59–79 (YFLT…INLL), 96–116 (ILMT…FWVP), 122–142 (ISLS…LSIL), 149–169 (INPH…GWGG), 178–198 (IMAY…LYNP), 201–221 (MFLN…LFML), 237–257 (APLI…LPPL), 274–294 (EMII…YFYM), and 323–343 (TIFL…TPMI).

The protein belongs to the complex I subunit 2 family. In terms of assembly, core subunit of respiratory chain NADH dehydrogenase (Complex I) which is composed of 45 different subunits. Interacts with TMEM242.

The protein localises to the mitochondrion inner membrane. The catalysed reaction is a ubiquinone + NADH + 5 H(+)(in) = a ubiquinol + NAD(+) + 4 H(+)(out). Core subunit of the mitochondrial membrane respiratory chain NADH dehydrogenase (Complex I) which catalyzes electron transfer from NADH through the respiratory chain, using ubiquinone as an electron acceptor. Essential for the catalytic activity and assembly of complex I. This is NADH-ubiquinone oxidoreductase chain 2 from Viverra tangalunga (Malayan civet).